The sequence spans 315 residues: Methionyl-tRNA formyltransferase (315 aa).

113–116 contributes to the (6S)-5,6,7,8-tetrahydrofolate binding site; the sequence is SLLP.

Belongs to the Fmt family.

It catalyses the reaction L-methionyl-tRNA(fMet) + (6R)-10-formyltetrahydrofolate = N-formyl-L-methionyl-tRNA(fMet) + (6S)-5,6,7,8-tetrahydrofolate + H(+). Functionally, attaches a formyl group to the free amino group of methionyl-tRNA(fMet). The formyl group appears to play a dual role in the initiator identity of N-formylmethionyl-tRNA by promoting its recognition by IF2 and preventing the misappropriation of this tRNA by the elongation apparatus. This chain is Methionyl-tRNA formyltransferase, found in Photorhabdus laumondii subsp. laumondii (strain DSM 15139 / CIP 105565 / TT01) (Photorhabdus luminescens subsp. laumondii).